The chain runs to 196 residues: Small ribosomal subunit protein uS4c (196 aa).

Positions 82–143 constitute an S4 RNA-binding domain; that stretch reads MRLDNILFRL…KQKSKALIQN (62 aa).

The protein belongs to the universal ribosomal protein uS4 family. In terms of assembly, part of the 30S ribosomal subunit. Contacts protein S5. The interaction surface between S4 and S5 is involved in control of translational fidelity.

The protein resides in the plastid. The protein localises to the chloroplast. Its function is as follows. One of the primary rRNA binding proteins, it binds directly to 16S rRNA where it nucleates assembly of the body of the 30S subunit. With S5 and S12 plays an important role in translational accuracy. The polypeptide is Small ribosomal subunit protein uS4c (rps4) (Patersonia sp. (strain Lejeune 1997)).